Here is a 182-residue protein sequence, read N- to C-terminus: ATP-dependent protease subunit HslV (182 aa).

Residue T12 is part of the active site. 3 residues coordinate Na(+): A167, C170, and T173.

Belongs to the peptidase T1B family. HslV subfamily. In terms of assembly, a double ring-shaped homohexamer of HslV is capped on each side by a ring-shaped HslU homohexamer. The assembly of the HslU/HslV complex is dependent on binding of ATP.

The protein localises to the cytoplasm. The catalysed reaction is ATP-dependent cleavage of peptide bonds with broad specificity.. Its activity is regulated as follows. Allosterically activated by HslU binding. Protease subunit of a proteasome-like degradation complex believed to be a general protein degrading machinery. This chain is ATP-dependent protease subunit HslV, found in Chlorobium limicola (strain DSM 245 / NBRC 103803 / 6330).